We begin with the raw amino-acid sequence, 66 residues long: Phylloseptin-S1 (66 aa).

An N-terminal signal peptide occupies residues 1-22; it reads MAFLKKSLFLVLFLGLVSLSIC. A propeptide spanning residues 23–46 is cleaved from the precursor; that stretch reads EEEKRETEEEEHDQEEDDKSEEKR. Residues 25–44 are disordered; the sequence is EKRETEEEEHDQEEDDKSEE. A compositionally biased stretch (acidic residues) spans 30–41; it reads EEEEHDQEEDDK. Phenylalanine amide is present on F65.

In terms of tissue distribution, expressed by the skin glands.

The protein localises to the secreted. Its subcellular location is the target cell membrane. Antimicrobial peptide with high activity against Gram-positive bacteria, low activity against Gram-negative bacteria, and moderate activity against fungi. Acts on bacterial biofilms (S.aureus) with the same potency than on bacteria. Acts by causing bacterial membrane disruption inducing leakage of the intracellular content followed by cell death. It adopts an alpha-helical amphipathic structure in membrane environments. Also shows highly potent antiparasitic activity against Leishmania species. Shows low hemolytic activity on horse and human erythrocytes (LC(50)=39 uM). Is also active on human monocytes (IC(50)=23 uM). This chain is Phylloseptin-S1, found in Phyllomedusa sauvagei (Sauvage's leaf frog).